Reading from the N-terminus, the 130-residue chain is Small ribosomal subunit protein uS11 (130 aa).

It belongs to the universal ribosomal protein uS11 family. In terms of assembly, part of the 30S ribosomal subunit. Interacts with proteins S7 and S18. Binds to IF-3.

Its function is as follows. Located on the platform of the 30S subunit, it bridges several disparate RNA helices of the 16S rRNA. Forms part of the Shine-Dalgarno cleft in the 70S ribosome. This is Small ribosomal subunit protein uS11 from Xylella fastidiosa (strain M23).